Reading from the N-terminus, the 318-residue chain is Aspartate carbamoyltransferase catalytic subunit (318 aa).

Residues Arg58 and Thr59 each coordinate carbamoyl phosphate. L-aspartate is bound at residue Lys86. 3 residues coordinate carbamoyl phosphate: Arg108, His141, and Gln144. 2 residues coordinate L-aspartate: Arg174 and Arg226. Residues Gly270 and Pro271 each coordinate carbamoyl phosphate.

This sequence belongs to the aspartate/ornithine carbamoyltransferase superfamily. ATCase family. In terms of assembly, heterododecamer (2C3:3R2) of six catalytic PyrB chains organized as two trimers (C3), and six regulatory PyrI chains organized as three dimers (R2).

It carries out the reaction carbamoyl phosphate + L-aspartate = N-carbamoyl-L-aspartate + phosphate + H(+). It participates in pyrimidine metabolism; UMP biosynthesis via de novo pathway; (S)-dihydroorotate from bicarbonate: step 2/3. Its function is as follows. Catalyzes the condensation of carbamoyl phosphate and aspartate to form carbamoyl aspartate and inorganic phosphate, the committed step in the de novo pyrimidine nucleotide biosynthesis pathway. This chain is Aspartate carbamoyltransferase catalytic subunit, found in Lactobacillus helveticus (strain DPC 4571).